The following is a 185-amino-acid chain: Threonylcarbamoyl-AMP synthase (185 aa).

The region spanning 4-185 (SWRVQQAAQD…IATGQVMRAG (182 aa)) is the YrdC-like domain.

It belongs to the SUA5 family. TsaC subfamily.

The protein resides in the cytoplasm. It catalyses the reaction L-threonine + hydrogencarbonate + ATP = L-threonylcarbamoyladenylate + diphosphate + H2O. Functionally, required for the formation of a threonylcarbamoyl group on adenosine at position 37 (t(6)A37) in tRNAs that read codons beginning with adenine. Catalyzes the conversion of L-threonine, HCO(3)(-)/CO(2) and ATP to give threonylcarbamoyl-AMP (TC-AMP) as the acyladenylate intermediate, with the release of diphosphate. This Pseudomonas savastanoi pv. phaseolicola (strain 1448A / Race 6) (Pseudomonas syringae pv. phaseolicola (strain 1448A / Race 6)) protein is Threonylcarbamoyl-AMP synthase.